A 287-amino-acid chain; its full sequence is NAD kinase (287 aa).

The Proton acceptor role is filled by Asp-56. NAD(+)-binding positions include 56 to 57, Arg-61, 128 to 129, and Asp-156; these read DG and ND.

The protein belongs to the NAD kinase family. The cofactor is a divalent metal cation.

It is found in the cytoplasm. It carries out the reaction NAD(+) + ATP = ADP + NADP(+) + H(+). Its function is as follows. Involved in the regulation of the intracellular balance of NAD and NADP, and is a key enzyme in the biosynthesis of NADP. Catalyzes specifically the phosphorylation on 2'-hydroxyl of the adenosine moiety of NAD to yield NADP. This chain is NAD kinase, found in Thermomicrobium roseum (strain ATCC 27502 / DSM 5159 / P-2).